Here is a 306-residue protein sequence, read N- to C-terminus: Lipoyl synthase (306 aa).

[4Fe-4S] cluster-binding residues include cysteine 52, cysteine 57, cysteine 63, cysteine 78, cysteine 82, cysteine 85, and serine 289. One can recognise a Radical SAM core domain in the interval 64–278 (WNRKTATYML…KETAYKIGFK (215 aa)).

This sequence belongs to the radical SAM superfamily. Lipoyl synthase family. Requires [4Fe-4S] cluster as cofactor.

Its subcellular location is the cytoplasm. It carries out the reaction [[Fe-S] cluster scaffold protein carrying a second [4Fe-4S](2+) cluster] + N(6)-octanoyl-L-lysyl-[protein] + 2 oxidized [2Fe-2S]-[ferredoxin] + 2 S-adenosyl-L-methionine + 4 H(+) = [[Fe-S] cluster scaffold protein] + N(6)-[(R)-dihydrolipoyl]-L-lysyl-[protein] + 4 Fe(3+) + 2 hydrogen sulfide + 2 5'-deoxyadenosine + 2 L-methionine + 2 reduced [2Fe-2S]-[ferredoxin]. Its pathway is protein modification; protein lipoylation via endogenous pathway; protein N(6)-(lipoyl)lysine from octanoyl-[acyl-carrier-protein]: step 2/2. Catalyzes the radical-mediated insertion of two sulfur atoms into the C-6 and C-8 positions of the octanoyl moiety bound to the lipoyl domains of lipoate-dependent enzymes, thereby converting the octanoylated domains into lipoylated derivatives. This chain is Lipoyl synthase, found in Leptospira biflexa serovar Patoc (strain Patoc 1 / Ames).